A 424-amino-acid chain; its full sequence is Histidine--tRNA ligase (424 aa).

It belongs to the class-II aminoacyl-tRNA synthetase family. Homodimer.

Its subcellular location is the cytoplasm. The enzyme catalyses tRNA(His) + L-histidine + ATP = L-histidyl-tRNA(His) + AMP + diphosphate + H(+). This chain is Histidine--tRNA ligase, found in Bacillus velezensis (strain DSM 23117 / BGSC 10A6 / LMG 26770 / FZB42) (Bacillus amyloliquefaciens subsp. plantarum).